The primary structure comprises 502 residues: D-erythritol 1-phosphate dehydrogenase (502 aa).

Aspartate 8 to glutamate 36 is an FAD binding site.

The protein belongs to the FAD-dependent glycerol-3-phosphate dehydrogenase family. FAD is required as a cofactor.

The catalysed reaction is D-erythritol 1-phosphate + NADP(+) = D-erythrulose 1-phosphate + NADPH + H(+). Its pathway is carbohydrate metabolism; erythritol degradation. Catalyzes the oxydation of D-erythritol 1-phosphate to D-erythrulose 1-phosphate. This is D-erythritol 1-phosphate dehydrogenase from Brucella abortus (strain 2308).